Consider the following 366-residue polypeptide: Chorismate synthase (366 aa).

Residues arginine 47 and arginine 53 each coordinate NADP(+). Residues 124 to 126 (RSS), glycine 286, 301 to 305 (KPTAT), and arginine 327 each bind FMN.

This sequence belongs to the chorismate synthase family. As to quaternary structure, homotetramer. Requires FMNH2 as cofactor.

The catalysed reaction is 5-O-(1-carboxyvinyl)-3-phosphoshikimate = chorismate + phosphate. It participates in metabolic intermediate biosynthesis; chorismate biosynthesis; chorismate from D-erythrose 4-phosphate and phosphoenolpyruvate: step 7/7. Its function is as follows. Catalyzes the anti-1,4-elimination of the C-3 phosphate and the C-6 proR hydrogen from 5-enolpyruvylshikimate-3-phosphate (EPSP) to yield chorismate, which is the branch point compound that serves as the starting substrate for the three terminal pathways of aromatic amino acid biosynthesis. This reaction introduces a second double bond into the aromatic ring system. The polypeptide is Chorismate synthase (Microcystis aeruginosa (strain NIES-843 / IAM M-2473)).